Reading from the N-terminus, the 318-residue chain is Beta-galactosidase small subunit (318 aa).

Belongs to the bacterial beta-galactosidase small subunit family. In terms of assembly, heterodimer of a large (LacL) and a small subunit (LacM).

The enzyme catalyses Hydrolysis of terminal non-reducing beta-D-galactose residues in beta-D-galactosides.. In terms of biological role, component of a beta-galactosidase. The sequence is that of Beta-galactosidase small subunit from Latilactobacillus sakei (Lactobacillus sakei).